A 219-amino-acid chain; its full sequence is Outer spore wall protein 4 (219 aa).

Positions 1–19 (MRFQLFIYFYFTIVVIAGT) are cleaved as a signal peptide. The Extracellular portion of the chain corresponds to 20-170 (NTIQQFSDAG…KKKRLDRIKR (151 aa)). Asparagine 42, asparagine 62, and asparagine 136 each carry an N-linked (GlcNAc...) asparagine glycan. A helical transmembrane segment spans residues 171–191 (ILTVSLLELGLAQGVADLCAV). Over 192 to 193 (AP) the chain is Cytoplasmic. Residues 194–214 (FACLLGVTVGSIGFIFWLALI) form a helical membrane-spanning segment. Topologically, residues 215–219 (YNAIQ) are extracellular.

Belongs to the OSW4/6 family. N-glycosylated.

The protein localises to the membrane. Functionally, involved in spore wall assembly. May be involved in maintaining genome integrity. This chain is Outer spore wall protein 4, found in Saccharomyces cerevisiae (strain ATCC 204508 / S288c) (Baker's yeast).